We begin with the raw amino-acid sequence, 520 residues long: Protein EARLY FLOWERING 5 (520 aa).

3 consecutive short sequence motifs (nuclear localization signal) follow at residues 16 to 23 (YRKQIRKR), 52 to 59 (IRKLDMSK), and 71 to 78 (KKRQLEDT). The disordered stretch occupies residues 83–410 (VKKRKEYDEK…PPSSFQDGQA (328 aa)). Composition is skewed to basic and acidic residues over residues 87–97 (KEYDEKKKEQG) and 114–126 (LTGE…EDSV). Over residues 148-168 (SSIGLAISSDGASSSSAALSS) the composition is skewed to low complexity. Pro residues-rich tracts occupy residues 198–207 (PLPPLPPLPP), 216–227 (SPFPPPPPGPPP), and 235–253 (PPLP…PPPG). Polar residues-rich tracts occupy residues 267–281 (SDFT…NITS), 300–312 (AESN…NANL), and 326–343 (QQHQ…TNFQ). Composition is skewed to pro residues over residues 346-369 (VHPP…PPHP) and 378-403 (PRPP…PPPS).

As to expression, in seedlings, mostly expressed in the shoot apical meristem (SAM) and root tip.

The protein resides in the nucleus. Its function is as follows. Involved in the regulation of flowering time in both long and short days. The chain is Protein EARLY FLOWERING 5 from Arabidopsis thaliana (Mouse-ear cress).